A 210-amino-acid chain; its full sequence is Probable glutathione peroxidase 8 (210 aa).

A helical transmembrane segment spans residues 13–35 (ASRAGLFKVLLSVALCMGSLYLL).

Belongs to the glutathione peroxidase family.

It is found in the membrane. It carries out the reaction 2 glutathione + H2O2 = glutathione disulfide + 2 H2O. This chain is Probable glutathione peroxidase 8 (gpx8), found in Danio rerio (Zebrafish).